A 169-amino-acid polypeptide reads, in one-letter code: Signal peptidase complex subunit 1 (169 aa).

Residues 1–93 (MARGGDTGCT…QKLAEQMFQG (93 aa)) lie on the Cytoplasmic side of the membrane. Positions 91–169 (FQGIILFSAI…RKIKRHAKNN (79 aa)) are (Microbial infection) Interaction with JEV NS2B. The helical transmembrane segment at 94-114 (IILFSAIVGFIYGYVAEQFGW) threads the bilayer. A (Microbial infection) Interaction with HCV NS2 and HCV E2 region spans residues 110-169 (EQFGWTVYIVMAGFAFSCLLTLPPWPIYRRHPLKWLPVQESSTDDKKPGERKIKRHAKNN). Residue Thr-115 is a topological domain, lumenal. Residues 116-136 (VYIVMAGFAFSCLLTLPPWPI) traverse the membrane as a helical segment. The Cytoplasmic portion of the chain corresponds to 137–169 (YRRHPLKWLPVQESSTDDKKPGERKIKRHAKNN). A disordered region spans residues 148 to 169 (QESSTDDKKPGERKIKRHAKNN).

This sequence belongs to the SPCS1 family. In terms of assembly, component of the signal peptidase complex paralog A (SPC-A) composed of a catalytic subunit SEC11A and three accessory subunits SPCS1, SPCS2 and SPCS3. Component of the signal peptidase complex paralog C (SPC-C) composed of a catalytic subunit SEC11C and three accessory subunits SPCS1, SPCS2 and SPCS3. Within the complex, interacts with SPCS2 and SPCS3. The complex induces a local thinning of the ER membrane which is used to measure the length of the signal peptide (SP) h-region of protein substrates. This ensures the selectivity of the complex towards h-regions shorter than 18-20 amino acids. As to quaternary structure, (Microbial infection) Interacts with hepatitis C virus (HCV) proteins NS2 and E2. Interacts with NS2B from Japanese encephalitis virus (JEV), West Nile virus (WNV), and Zika virus (ZIKV). May be phosphorylated.

The protein localises to the endoplasmic reticulum membrane. In terms of biological role, component of the signal peptidase complex (SPC) which catalyzes the cleavage of N-terminal signal sequences from nascent proteins as they are translocated into the lumen of the endoplasmic reticulum. Dispensable for SPC enzymatic activity. Its function is as follows. (Microbial infection) Required for the post-translational processing of proteins involved in virion assembly and secretion from flaviviruses such as West Nile virus (WNV), Japanese encephalitis virus (JEV), Dengue virus type 2 (DENV-2), Yellow Fever virus (YFV), Zika virus (ZIKV) and hepatitis C virus (HCV). Plays a key role in the post-translational processing of flaviviral structural proteins prM, E, and NS1. In HCV, it is involved in virion assembly where it promotes the interaction between HCV virus proteins NS2 and E2. This chain is Signal peptidase complex subunit 1 (SPCS1), found in Homo sapiens (Human).